We begin with the raw amino-acid sequence, 320 residues long: Acetyl-coenzyme A carboxylase carboxyl transferase subunit alpha (320 aa).

One can recognise a CoA carboxyltransferase C-terminal domain in the interval 33–294 (AFDTEIQALR…GDAVEDELKA (262 aa)).

Belongs to the AccA family. Acetyl-CoA carboxylase is a heterohexamer composed of biotin carboxyl carrier protein (AccB), biotin carboxylase (AccC) and two subunits each of ACCase subunit alpha (AccA) and ACCase subunit beta (AccD).

It is found in the cytoplasm. It carries out the reaction N(6)-carboxybiotinyl-L-lysyl-[protein] + acetyl-CoA = N(6)-biotinyl-L-lysyl-[protein] + malonyl-CoA. It participates in lipid metabolism; malonyl-CoA biosynthesis; malonyl-CoA from acetyl-CoA: step 1/1. In terms of biological role, component of the acetyl coenzyme A carboxylase (ACC) complex. First, biotin carboxylase catalyzes the carboxylation of biotin on its carrier protein (BCCP) and then the CO(2) group is transferred by the carboxyltransferase to acetyl-CoA to form malonyl-CoA. In Caulobacter vibrioides (strain ATCC 19089 / CIP 103742 / CB 15) (Caulobacter crescentus), this protein is Acetyl-coenzyme A carboxylase carboxyl transferase subunit alpha.